The sequence spans 441 residues: MKVHVVGAGLSGSEIAYQLAIRGLKVILHEMRPSKMTPVHKTSYFAELVCSNSLKSDSIKNASGLLKRELELFGSLILRVARNCAVPAGKALAVDREEFSKQVTHVIRESGIDIVIEELRYIPDSKEDIWIIATGPATSDSFASWLREKVGHNMYFFDAVSPIITADSIDYSVVFRADRYGIGNQDYLNCPMNEYEYDRFYEALINAEVLPVKDFEKDLLFERCKPIEDIAKSGKRSLLFGPMKPTGIIDPRTGKQPFAVVQLRKENLDETLYNIVGFQTRLKWGEQRKIIRLIPGLEKAEIVRYGVMHKNIYINSRKVLDPFMRLKNDRKIFFAGQITGVEGYLESVASGLYVALNVYRISKNQEPLELPKSTMTGCLLNYILKGTDTTLQPMYANYGLMGPANKNREEVAKTALRDLENFLNYSQWKEGGIRENTVKGF.

7-12 (GAGLSG) contributes to the FAD binding site.

The protein belongs to the MnmG family. TrmFO subfamily. FAD is required as a cofactor.

The protein resides in the cytoplasm. The catalysed reaction is uridine(54) in tRNA + (6R)-5,10-methylene-5,6,7,8-tetrahydrofolate + NADH + H(+) = 5-methyluridine(54) in tRNA + (6S)-5,6,7,8-tetrahydrofolate + NAD(+). The enzyme catalyses uridine(54) in tRNA + (6R)-5,10-methylene-5,6,7,8-tetrahydrofolate + NADPH + H(+) = 5-methyluridine(54) in tRNA + (6S)-5,6,7,8-tetrahydrofolate + NADP(+). Its function is as follows. Catalyzes the folate-dependent formation of 5-methyl-uridine at position 54 (M-5-U54) in all tRNAs. This is Methylenetetrahydrofolate--tRNA-(uracil-5-)-methyltransferase TrmFO from Pseudothermotoga lettingae (strain ATCC BAA-301 / DSM 14385 / NBRC 107922 / TMO) (Thermotoga lettingae).